A 491-amino-acid polypeptide reads, in one-letter code: Probable CtpA-like serine protease (491 aa).

The tract at residues 1-22 (MSESKDTTEVNQEVNEKASSQS) is disordered. A compositionally biased stretch (polar residues) spans 9–22 (EVNQEVNEKASSQS). The helical transmembrane segment at 34–54 (FIIILIVTILVTAMIAVFATI) threads the bilayer. Positions 119–201 (TKSFNEDVSG…TKVTLTIERG (83 aa)) constitute a PDZ domain. Active-site charge relay system residues include serine 324, aspartate 335, and lysine 349.

The protein belongs to the peptidase S41A family.

It localises to the cell membrane. The polypeptide is Probable CtpA-like serine protease (Staphylococcus saprophyticus subsp. saprophyticus (strain ATCC 15305 / DSM 20229 / NCIMB 8711 / NCTC 7292 / S-41)).